The sequence spans 152 residues: Large ribosomal subunit protein uL15 (152 aa).

The tract at residues 1-66 (MRSNPMTLRL…GFEGGQTPMQ (66 aa)) is disordered. Over residues 28 to 38 (RGIGSGLGKTA) the composition is skewed to gly residues. The segment covering 39-52 (GRGHKGSFARKGGG) has biased composition (basic residues).

This sequence belongs to the universal ribosomal protein uL15 family. In terms of assembly, part of the 50S ribosomal subunit.

Binds to the 23S rRNA. The sequence is that of Large ribosomal subunit protein uL15 from Xanthomonas oryzae pv. oryzae (strain KACC10331 / KXO85).